The chain runs to 1378 residues: Bud site selection protein 4 (1378 aa).

Disordered regions lie at residues 71 to 95 (NNVI…NNDK), 361 to 441 (KDSP…NSES), and 458 to 480 (TNKS…LKSS). The segment covering 361–378 (KDSPENTLHTNEDQKEAN) has biased composition (basic and acidic residues). Positions 406–415 (STITNITNDT) are enriched in low complexity. The segment covering 420–430 (EGSKAEEDAKN) has biased composition (basic and acidic residues). The segment covering 431–441 (SDVSNSQNSES) has biased composition (polar residues). The segment covering 470–480 (EPPKENELKSS) has biased composition (basic and acidic residues). Positions 1240–1357 (LISKEGYLMQ…WYSKLKKTVD (118 aa)) constitute a PH domain.

Belongs to the BUD4 family.

It is found in the bud neck. Required for selection of future bud sites. Cooperates with other bud site selection proteins to recognize a spatial landmark during mitosis and they subsequently become a landmark for downstream polarity establishment factors that coordinate budding and cytokinesis. Involved in the septin organization at the bud neck. The sequence is that of Bud site selection protein 4 (BUD4) from Vanderwaltozyma polyspora (strain ATCC 22028 / DSM 70294 / BCRC 21397 / CBS 2163 / NBRC 10782 / NRRL Y-8283 / UCD 57-17) (Kluyveromyces polysporus).